A 240-amino-acid chain; its full sequence is Phosphoribosylaminoimidazole-succinocarboxamide synthase (240 aa).

This sequence belongs to the SAICAR synthetase family.

The catalysed reaction is 5-amino-1-(5-phospho-D-ribosyl)imidazole-4-carboxylate + L-aspartate + ATP = (2S)-2-[5-amino-1-(5-phospho-beta-D-ribosyl)imidazole-4-carboxamido]succinate + ADP + phosphate + 2 H(+). The protein operates within purine metabolism; IMP biosynthesis via de novo pathway; 5-amino-1-(5-phospho-D-ribosyl)imidazole-4-carboxamide from 5-amino-1-(5-phospho-D-ribosyl)imidazole-4-carboxylate: step 1/2. The protein is Phosphoribosylaminoimidazole-succinocarboxamide synthase of Wolbachia sp. subsp. Brugia malayi (strain TRS).